Reading from the N-terminus, the 265-residue chain is SPbeta prophage-derived uncharacterized protein YomU (265 aa).

The segment at 238–265 is disordered; the sequence is KADGTKGVVTSDEGTGSSQSSDLGGTTE. Residues 249–265 are compositionally biased toward polar residues; sequence DEGTGSSQSSDLGGTTE.

This is SPbeta prophage-derived uncharacterized protein YomU (yomU) from Bacillus subtilis (strain 168).